Here is a 646-residue protein sequence, read N- to C-terminus: Chaperone protein DnaK (646 aa).

Thr-198 is modified (phosphothreonine; by autocatalysis). The segment at 603–646 is disordered; that stretch reads EQAQQAGGAEGFDPNAFQGGDAGQQKADDGVVDAEFTEVKDDKK. Over residues 618–627 the composition is skewed to low complexity; sequence AFQGGDAGQQ.

It belongs to the heat shock protein 70 family.

Functionally, acts as a chaperone. The protein is Chaperone protein DnaK of Acinetobacter baumannii (strain ACICU).